A 61-amino-acid polypeptide reads, in one-letter code: Small ribosomal subunit protein uS14 (61 aa).

Zn(2+)-binding residues include Cys-24, Cys-27, Cys-40, and Cys-43.

Belongs to the universal ribosomal protein uS14 family. Zinc-binding uS14 subfamily. Part of the 30S ribosomal subunit. Contacts proteins S3 and S10. The cofactor is Zn(2+).

In terms of biological role, binds 16S rRNA, required for the assembly of 30S particles and may also be responsible for determining the conformation of the 16S rRNA at the A site. The protein is Small ribosomal subunit protein uS14 of Finegoldia magna (strain ATCC 29328 / DSM 20472 / WAL 2508) (Peptostreptococcus magnus).